A 216-amino-acid polypeptide reads, in one-letter code: GTP cyclohydrolase 1 (216 aa).

3 residues coordinate Zn(2+): C108, H111, and C179.

It belongs to the GTP cyclohydrolase I family. As to quaternary structure, homomer.

The enzyme catalyses GTP + H2O = 7,8-dihydroneopterin 3'-triphosphate + formate + H(+). The protein operates within cofactor biosynthesis; 7,8-dihydroneopterin triphosphate biosynthesis; 7,8-dihydroneopterin triphosphate from GTP: step 1/1. The protein is GTP cyclohydrolase 1 of Shewanella baltica (strain OS223).